Here is a 333-residue protein sequence, read N- to C-terminus: 4-hydroxyproline 2-epimerase (333 aa).

Residue cysteine 90 is the Proton acceptor of the active site. Substrate is bound by residues glycine 91–histidine 92, histidine 223, and aspartate 249. The Proton donor role is filled by cysteine 253. Glycine 254–threonine 255 is a binding site for substrate.

Belongs to the proline racemase family.

It carries out the reaction trans-4-hydroxy-L-proline = cis-4-hydroxy-D-proline. In terms of biological role, catalyzes the epimerization of trans-4-hydroxy-L-proline (t4LHyp) to cis-4-hydroxy-D-proline (c4DHyp). Is likely involved in a degradation pathway that converts t4LHyp to alpha-ketoglutarate. Displays no proline racemase activity. In Shewanella loihica (strain ATCC BAA-1088 / PV-4), this protein is 4-hydroxyproline 2-epimerase.